We begin with the raw amino-acid sequence, 53 residues long: Putative defensin-like protein 53 (53 aa).

4 cysteine pairs are disulfide-bonded: C12/C51, C16/C40, C26/C49, and C30/C50.

This sequence belongs to the DEFL family.

In Arabidopsis thaliana (Mouse-ear cress), this protein is Putative defensin-like protein 53.